A 498-amino-acid chain; its full sequence is Guanosine-5'-triphosphate,3'-diphosphate pyrophosphatase (498 aa).

It belongs to the GppA/Ppx family. GppA subfamily.

It catalyses the reaction guanosine 3'-diphosphate 5'-triphosphate + H2O = guanosine 3',5'-bis(diphosphate) + phosphate + H(+). The protein operates within purine metabolism; ppGpp biosynthesis; ppGpp from GTP: step 2/2. Functionally, catalyzes the conversion of pppGpp to ppGpp. Guanosine pentaphosphate (pppGpp) is a cytoplasmic signaling molecule which together with ppGpp controls the 'stringent response', an adaptive process that allows bacteria to respond to amino acid starvation, resulting in the coordinated regulation of numerous cellular activities. This is Guanosine-5'-triphosphate,3'-diphosphate pyrophosphatase from Yersinia pseudotuberculosis serotype O:1b (strain IP 31758).